The following is a 137-amino-acid chain: Probable DNA-directed RNA polymerases I, II, and III subunit RPABC2 (137 aa).

2 stretches are compositionally biased toward acidic residues: residues 1–27 and 34–43; these read MADE…VIEE and NEDEDDDNVD. Positions 1–43 are disordered; sequence MADEDDYQDMDNDDFVDDNEMEDVIEEDPQRPDNEDEDDDNVD.

Belongs to the archaeal Rpo6/eukaryotic RPB6 RNA polymerase subunit family. As to quaternary structure, component of the RNA polymerase I (Pol I), RNA polymerase II (Pol II) and RNA polymerase III (Pol III) complexes consisting of at least 13, 12 and 17 subunits, respectively.

The protein localises to the nucleus. In terms of biological role, DNA-dependent RNA polymerases catalyze the transcription of DNA into RNA using the four ribonucleoside triphosphates as substrates. Common component of RNA polymerases I, II and III which synthesize ribosomal RNA precursors, mRNA precursors and many functional non-coding RNAs, and small RNAs, such as 5S rRNA and tRNAs, respectively. Pol II is the central component of the basal RNA polymerase II transcription machinery. Pols are composed of mobile elements that move relative to each other. In Pol II, RPB6 is part of the clamp element and together with parts of RPB1 and RPB2 forms a pocket to which the RPB4-RPB7 subcomplex binds. The chain is Probable DNA-directed RNA polymerases I, II, and III subunit RPABC2 (rpb-6) from Caenorhabditis elegans.